We begin with the raw amino-acid sequence, 284 residues long: AA14 family lytic polysaccharide monooxygenase B (284 aa).

A signal peptide spans 1-20; it reads MGYLSKLVTSVVFAIPLASA. N-linked (GlcNAc...) asparagine glycosylation is found at asparagine 42, asparagine 96, asparagine 142, and asparagine 183. Residues cysteine 197 and cysteine 218 are joined by a disulfide bond.

The protein belongs to the polysaccharide monooxygenase AA14 family. The cofactor is Cu(2+).

Its subcellular location is the secreted. In terms of biological role, lytic polysaccharide monooxygenase (LPMO) that plays decomposes some specific network structures formed between cellulose and hemicellulose in the plant cell walls. Catalysis by LPMOs requires the reduction of the active-site copper from Cu(II) to Cu(I) by a reducing agent and H(2)O(2) or O(2) as a cosubstrate. In Talaromyces rugulosus (Penicillium rugulosum), this protein is AA14 family lytic polysaccharide monooxygenase B.